The following is a 338-amino-acid chain: Uroporphyrinogen decarboxylase (338 aa).

Substrate contacts are provided by residues Arg-25–Arg-29, Phe-44, Asp-75, Tyr-146, Ser-201, and His-314.

The protein belongs to the uroporphyrinogen decarboxylase family. As to quaternary structure, homodimer.

It is found in the cytoplasm. It carries out the reaction uroporphyrinogen III + 4 H(+) = coproporphyrinogen III + 4 CO2. Its pathway is porphyrin-containing compound metabolism; protoporphyrin-IX biosynthesis; coproporphyrinogen-III from 5-aminolevulinate: step 4/4. Catalyzes the decarboxylation of four acetate groups of uroporphyrinogen-III to yield coproporphyrinogen-III. This is Uroporphyrinogen decarboxylase from Aquifex aeolicus (strain VF5).